The chain runs to 181 residues: Lipoprotein signal peptidase (181 aa).

Helical transmembrane passes span Leu-25 to Ile-45, Leu-86 to Val-106, and Lys-107 to Asp-127. Catalysis depends on residues Asp-138 and Asp-153. Residues Phe-149–Ile-169 form a helical membrane-spanning segment.

Belongs to the peptidase A8 family.

It localises to the cell membrane. It catalyses the reaction Release of signal peptides from bacterial membrane prolipoproteins. Hydrolyzes -Xaa-Yaa-Zaa-|-(S,diacylglyceryl)Cys-, in which Xaa is hydrophobic (preferably Leu), and Yaa (Ala or Ser) and Zaa (Gly or Ala) have small, neutral side chains.. Its pathway is protein modification; lipoprotein biosynthesis (signal peptide cleavage). Its function is as follows. This protein specifically catalyzes the removal of signal peptides from prolipoproteins. The chain is Lipoprotein signal peptidase from Mycoplasma genitalium (strain ATCC 33530 / DSM 19775 / NCTC 10195 / G37) (Mycoplasmoides genitalium).